The primary structure comprises 477 residues: Aspartyl/glutamyl-tRNA(Asn/Gln) amidotransferase subunit B (477 aa).

Belongs to the GatB/GatE family. GatB subfamily. In terms of assembly, heterotrimer of A, B and C subunits.

It catalyses the reaction L-glutamyl-tRNA(Gln) + L-glutamine + ATP + H2O = L-glutaminyl-tRNA(Gln) + L-glutamate + ADP + phosphate + H(+). It carries out the reaction L-aspartyl-tRNA(Asn) + L-glutamine + ATP + H2O = L-asparaginyl-tRNA(Asn) + L-glutamate + ADP + phosphate + 2 H(+). In terms of biological role, allows the formation of correctly charged Asn-tRNA(Asn) or Gln-tRNA(Gln) through the transamidation of misacylated Asp-tRNA(Asn) or Glu-tRNA(Gln) in organisms which lack either or both of asparaginyl-tRNA or glutaminyl-tRNA synthetases. The reaction takes place in the presence of glutamine and ATP through an activated phospho-Asp-tRNA(Asn) or phospho-Glu-tRNA(Gln). This is Aspartyl/glutamyl-tRNA(Asn/Gln) amidotransferase subunit B from Bdellovibrio bacteriovorus (strain ATCC 15356 / DSM 50701 / NCIMB 9529 / HD100).